The following is a 666-amino-acid chain: Zinc finger MYM-type protein 5 (666 aa).

Glycyl lysine isopeptide (Lys-Gly) (interchain with G-Cter in SUMO2) cross-links involve residues Lys85, Lys88, Lys146, and Lys163. The tract at residues 87–106 (EKPQGNYSVIPPPSRDLASQ) is disordered. A disordered region spans residues 191–212 (SPDSWISQSASFPRNQKQPGVD). Polar residues predominate over residues 194–208 (SWISQSASFPRNQKQ). A Glycyl lysine isopeptide (Lys-Gly) (interchain with G-Cter in SUMO2) cross-link involves residue Lys222. 4 consecutive MYM-type zinc fingers follow at residues 262-296 (HLFC…KKAD), 308-348 (QEFC…RHEV), 355-390 (HKLC…KSTG), and 401-428 (KRFC…ASEN). Residues Lys440, Lys452, Lys459, and Lys549 each participate in a glycyl lysine isopeptide (Lys-Gly) (interchain with G-Cter in SUMO2) cross-link.

In terms of assembly, interacts (via N-terminal 120 amino acid region) with ETV5 (via C-terminal).

Its subcellular location is the nucleus. Functions as a transcriptional regulator. This is Zinc finger MYM-type protein 5 (ZMYM5) from Macaca fascicularis (Crab-eating macaque).